A 160-amino-acid polypeptide reads, in one-letter code: Crossover junction endodeoxyribonuclease RuvC (160 aa).

Active-site residues include aspartate 7, glutamate 67, and aspartate 138. 3 residues coordinate Mg(2+): aspartate 7, glutamate 67, and aspartate 138.

It belongs to the RuvC family. Homodimer which binds Holliday junction (HJ) DNA. The HJ becomes 2-fold symmetrical on binding to RuvC with unstacked arms; it has a different conformation from HJ DNA in complex with RuvA. In the full resolvosome a probable DNA-RuvA(4)-RuvB(12)-RuvC(2) complex forms which resolves the HJ. Requires Mg(2+) as cofactor.

Its subcellular location is the cytoplasm. The catalysed reaction is Endonucleolytic cleavage at a junction such as a reciprocal single-stranded crossover between two homologous DNA duplexes (Holliday junction).. In terms of biological role, the RuvA-RuvB-RuvC complex processes Holliday junction (HJ) DNA during genetic recombination and DNA repair. Endonuclease that resolves HJ intermediates. Cleaves cruciform DNA by making single-stranded nicks across the HJ at symmetrical positions within the homologous arms, yielding a 5'-phosphate and a 3'-hydroxyl group; requires a central core of homology in the junction. The consensus cleavage sequence is 5'-(A/T)TT(C/G)-3'. Cleavage occurs on the 3'-side of the TT dinucleotide at the point of strand exchange. HJ branch migration catalyzed by RuvA-RuvB allows RuvC to scan DNA until it finds its consensus sequence, where it cleaves and resolves the cruciform DNA. The sequence is that of Crossover junction endodeoxyribonuclease RuvC from Brachyspira hyodysenteriae (strain ATCC 49526 / WA1).